A 379-amino-acid polypeptide reads, in one-letter code: Sporozoite surface protein P36 (379 aa).

A signal peptide spans 1–33 (MAYNIWEEYIMANFHNVYPVVTNLFLFIALSYS). 6-Cys domains lie at 69–206 (FVFF…VKAN) and 215–379 (FIKG…TVES). Cystine bridges form between cysteine 91–cysteine 101, cysteine 115–cysteine 186, and cysteine 129–cysteine 184. N-linked (GlcNAc...) asparagine glycosylation is found at asparagine 98 and asparagine 118. Residue asparagine 206 is glycosylated (N-linked (GlcNAc...) asparagine). Disulfide bonds link cysteine 219–cysteine 243, cysteine 257–cysteine 360, and cysteine 295–cysteine 358. 2 N-linked (GlcNAc...) asparagine glycosylation sites follow: asparagine 298 and asparagine 374.

The protein localises to the cell surface. It is found in the cell membrane. In terms of biological role, involved in sporozoite infection of hepatocytes and replication therein. This chain is Sporozoite surface protein P36 (PF36), found in Plasmodium falciparum (isolate 3D7).